We begin with the raw amino-acid sequence, 678 residues long: Ribosome biogenesis protein BOP1 homolog (678 aa).

The span at 1 to 10 shows a compositional bias: basic and acidic residues; it reads MGHSDGDHGS. The segment at 1-73 is disordered; sequence MGHSDGDHGS…VAPRNTIGDV (73 aa). The span at 24-63 shows a compositional bias: acidic residues; it reads WSDDDDEGSLSFEDSGEGSDAESDEPDAPAVEESDSSEDE. WD repeat units lie at residues 343 to 384, 386 to 424, 463 to 505, 508 to 548, 549 to 588, 592 to 631, and 647 to 678; these read GHNG…KVWN, GGVV…EDAQ, IHHK…SHHP, KLPG…KKLE, SGVR…RPYK, NHSK…DLNQ, and SDGR…LYCD.

It belongs to the WD repeat BOP1/ERB1 family.

The protein localises to the nucleus. It localises to the nucleolus. It is found in the nucleoplasm. Required for maturation of ribosomal RNAs and formation of the large ribosomal subunit. In Oryza sativa subsp. japonica (Rice), this protein is Ribosome biogenesis protein BOP1 homolog.